The following is a 339-amino-acid chain: MNWELLLWLLVLCALLLLLVQLLRFLRADGDLTLLWAEWQGRRPEWELTDMVVWVTGASSGIGEELAYQLSKLGVSLVLSARRVHELERVKRRCLENGNLKEKDILVLPLDLTDTGSHEAATKAVLQEFGRIDILVNNGGMSQRSLCMDTSLDVYRKLIELNYLGTVSLTKCVLPHMIERKQGKIVTVNSILGIISVPLSIGYCASKHALRGFFNGLRTELATYPGIIVSNICPGPVQSNIVENSLAGEVTKTIGNNGDQSHKMTTSRCVRLMLISMANDLKEVWISEQPFLLVTYLWQYMPTWAWWITNKMGKKRIENFKSGVDADSSYFKIFKTKHD.

Residues 1-28 form the signal peptide; the sequence is MNWELLLWLLVLCALLLLLVQLLRFLRA. Residues S60 and I62 each coordinate NAD(+). S190 is a substrate binding site. NAD(+)-binding residues include Y203, K207, and S239. Y203 serves as the catalytic Proton acceptor.

It belongs to the short-chain dehydrogenases/reductases (SDR) family. Found predominantly in the adrenal glands, liver, thyroid, prostate, small intestine, colon, stomach, kidney and brain. Lower levels observed in skeletal muscle, the lung and the spleen.

The protein resides in the endoplasmic reticulum membrane. The enzyme catalyses all-trans-retinol + NADP(+) = all-trans-retinal + NADPH + H(+). It carries out the reaction 5alpha-androstane-3alpha,17beta-diol + NADP(+) = 17beta-hydroxy-5alpha-androstan-3-one + NADPH + H(+). In terms of biological role, NADPH-dependent oxidoreductase which catalyzes the reduction of a variety of compounds bearing carbonyl groups including steroids, retinoids and xenobiotics. Catalyzes the reduction/inactivation of 5alpha-dihydrotestosterone to 3alpha-androstanediol, with a possible role in the modulation of androgen receptor function. Involved in the reduction of all-trans-retinal to all-trans-retinol. Converts cortisone to 20beta-dihydrocortisone in vitro, although the physiological relevance of this activity is questionable. Reduces exogenous compounds such as quinones (1,2-naphtoquinone, 9,10-phenantrenequinone and benzoquinone) and other xenobiotics (alpha-diketones) in vitro, suggesting a role in the biotransformation of xenobiotics with carbonyl group. A dehydrogenase activity has not been detected so far. May play a role as tumor suppressor. The protein is Dehydrogenase/reductase SDR family member 7 of Homo sapiens (Human).